Here is a 465-residue protein sequence, read N- to C-terminus: Putative adhesin P1-like protein MPN_286 (465 aa).

Disordered regions lie at residues 9-48 (GNGHRYGNDHRGSNSSTSGVTTQGQQSQNASGTEPASTFS), 59-78 (QGTLGGSQTTTTGKDIPKWP), and 93-167 (WRND…LPPN). Residues 21–37 (SNSSTSGVTTQGQQSQN) show a composition bias toward low complexity. Residues 38 to 48 (ASGTEPASTFS) show a composition bias toward polar residues. A compositionally biased stretch (low complexity) spans 111-131 (TSATGSGQQGSSSGTTNSAGN). Residues 135–144 (LKQDKVDKSG) are compositionally biased toward basic and acidic residues. Residues 145–156 (DSVTVAETTSGD) show a composition bias toward polar residues. Positions 157-167 (NLTNYTNLPPN) are enriched in low complexity.

The protein belongs to the adhesin P1 family.

The chain is Putative adhesin P1-like protein MPN_286 from Mycoplasma pneumoniae (strain ATCC 29342 / M129 / Subtype 1) (Mycoplasmoides pneumoniae).